The sequence spans 68 residues: MIYPSINELMKKVDSRYTLAVEAAKRARQLVDGATKMAKCDSDKEVTIAINEIAEDKITYVRTKSGIK.

This sequence belongs to the RNA polymerase subunit omega family. The RNAP catalytic core consists of 2 alpha, 1 beta, 1 beta' and 1 omega subunit. When a sigma factor is associated with the core the holoenzyme is formed, which can initiate transcription.

The enzyme catalyses RNA(n) + a ribonucleoside 5'-triphosphate = RNA(n+1) + diphosphate. Promotes RNA polymerase assembly. Latches the N- and C-terminal regions of the beta' subunit thereby facilitating its interaction with the beta and alpha subunits. This is DNA-directed RNA polymerase subunit omega from Ruminiclostridium cellulolyticum (strain ATCC 35319 / DSM 5812 / JCM 6584 / H10) (Clostridium cellulolyticum).